Consider the following 465-residue polypeptide: Sensor histidine kinase ZraS (465 aa).

Topologically, residues 1 to 14 (MSFIRLHKDAAATW) are cytoplasmic. The helical transmembrane segment at 15–35 (LSRLLPAAIFILVGLFSIMVI) threads the bilayer. Residues 36 to 202 (RDYGRESAAA…AATQAREWRN (167 aa)) lie on the Periplasmic side of the membrane. A helical membrane pass occupies residues 203–223 (TLIVLSALAAVLLATLLAFFW). Topologically, residues 224-465 (HQRYQRSHRE…WLPVIARQQD (242 aa)) are cytoplasmic. The Histidine kinase domain maps to 253–461 (GVAHEIRNPL…VFTIWLPVIA (209 aa)). His-256 is subject to Phosphohistidine; by autocatalysis.

In terms of processing, autophosphorylated.

The protein resides in the cell inner membrane. It carries out the reaction ATP + protein L-histidine = ADP + protein N-phospho-L-histidine.. With respect to regulation, activity of the ZraS/ZraR two-component system is repressed by the zinc-bound form of ZraP, which probably interacts with the periplasmic region of ZraS. Functionally, part of the Zra signaling pathway, an envelope stress response (ESR) system composed of the periplasmic accessory protein ZraP, the histidine kinase ZraS and the transcriptional regulator ZraR. The ZraPSR system contributes to antibiotic resistance and is important for membrane integrity in the presence of membrane-targeting biocides. ZraS is a member of the two-component regulatory system ZraS/ZraR. Functions as a membrane-associated sensor kinase that phosphorylates ZraR in response to high concentrations of Zn(2+) or Pb(2+) in the medium. In Salmonella typhimurium (strain LT2 / SGSC1412 / ATCC 700720), this protein is Sensor histidine kinase ZraS.